The chain runs to 475 residues: Ankyrin repeat, SAM and basic leucine zipper domain-containing protein 1 (475 aa).

Residues 1-25 (MAAGALRGLPVAGGGESSESEDDGW) are disordered. 3 positions are modified to phosphoserine: Ser-17, Ser-18, and Ser-20. ANK repeat units lie at residues 45–74 (EKKEKFKKAMTIGDVSLVQELLDSGISVDS), 78–107 (YGWTPLMYAASVANAELVRVLLDRGANASF), 110–144 (DKQTILITACSAHGSEEQILKCVELLLSRNADPNV), 148–177 (RLMTPIMYAARDGHTQVVALLVAHGAEVNT), 181–210 (NGYTALTWAARQGHKNIVLKLLELGANKML), and 214–243 (DGKMPSEIAKRNKHHEIFNLLSFTLNPLEG). An SAM domain is found at 272–334 (SYTAFGDLEV…KILAALKELQ (63 aa)).

In terms of assembly, interacts with DDX4, PIWIL1, RANBP9 and TDRD1.

The protein localises to the cytoplasm. Functionally, plays a central role during spermatogenesis by repressing transposable elements and preventing their mobilization, which is essential for the germline integrity. Acts via the piRNA metabolic process, which mediates the repression of transposable elements during meiosis by forming complexes composed of piRNAs and Piwi proteins and governs the methylation and subsequent repression of transposons. Its association with pi-bodies suggests a participation in the primary piRNAs metabolic process. Required prior to the pachytene stage to facilitate the production of multiple types of piRNAs, including those associated with repeats involved in the regulation of retrotransposons. May act by mediating protein-protein interactions during germ cell maturation. The sequence is that of Ankyrin repeat, SAM and basic leucine zipper domain-containing protein 1 (ASZ1) from Chlorocebus aethiops (Green monkey).